The chain runs to 165 residues: Nucleotide-binding protein LBF_1338 (165 aa).

It belongs to the YajQ family.

Functionally, nucleotide-binding protein. The chain is Nucleotide-binding protein LBF_1338 from Leptospira biflexa serovar Patoc (strain Patoc 1 / Ames).